The chain runs to 875 residues: cGMP-specific 3',5'-cyclic phosphodiesterase (875 aa).

Disordered stretches follow at residues Met-1–Ser-29 and Ser-78–Ser-102. The span at Gln-10–Gln-22 shows a compositional bias: low complexity. Positions Ser-78 to Ile-101 are enriched in polar residues. A Phosphoserine modification is found at Ser-102. GAF domains lie at Asp-164–Leu-314 and Ser-346–Ile-503. The PDEase domain occupies Glu-536–Gln-860. Catalysis depends on His-613, which acts as the Proton donor. Zn(2+)-binding residues include His-617, His-653, Asp-654, and Asp-764. Position 654 (Asp-654) interacts with Mg(2+). Gln-817 provides a ligand contact to 3',5'-cyclic GMP.

Belongs to the cyclic nucleotide phosphodiesterase family. Zn(2+) is required as a cofactor. The cofactor is Mg(2+). In terms of processing, phosphorylation is regulated by binding of cGMP to the two allosteric sites. Phosphorylation by PRKG1 leads to its activation. In terms of tissue distribution, expressed in aortic smooth muscle cells, heart, placenta, skeletal muscle and pancreas and, to a much lesser extent, in brain, liver and lung.

It catalyses the reaction 3',5'-cyclic GMP + H2O = GMP + H(+). The protein operates within purine metabolism; 3',5'-cyclic GMP degradation; GMP from 3',5'-cyclic GMP: step 1/1. Its activity is regulated as follows. Sildenafil (Viagra) is a highly selective and potent inhibitor of PDE5A and is effective in the treatment of penile erectile dysfunction. Also inhibited by zaprinast. Its function is as follows. Plays a role in signal transduction by regulating the intracellular concentration of cyclic nucleotides. This phosphodiesterase catalyzes the specific hydrolysis of cGMP to 5'-GMP. Specifically regulates nitric-oxide-generated cGMP. In Homo sapiens (Human), this protein is cGMP-specific 3',5'-cyclic phosphodiesterase.